The sequence spans 631 residues: Guanylate-binding protein 4 (631 aa).

In terms of domain architecture, GB1/RHD3-type G spans 33 to 283; sequence SQPVVVVAIV…FASYIFTYAK (251 aa). GTP is bound by residues 43–50 and 103–107; these read GWSHTGKS and DTEGL. Residues 492–592 are a coiled coil; that stretch reads IAEKHTKKEA…GHNIKEMKQN (101 aa).

Belongs to the TRAFAC class dynamin-like GTPase superfamily. GB1/RHD3 GTPase family. GB1 subfamily. In terms of assembly, heterodimer with other family members, including GBP1, GBP2 and GBP5. Dimerization regulates subcellular location. Interacts with IRF7; preventing interaction between TRAF6 and IRF7, resulting in impaired TRAF6-mediated IRF7 ubiquitination. As to expression, mainly expressed in organs of the immune system, such as spleen and lymph nodes.

It localises to the golgi apparatus membrane. The protein localises to the cytoplasm. The protein resides in the nucleus. It is found in the perinuclear region. The enzyme catalyses GTP + H2O = GDP + phosphate + H(+). Functionally, interferon (IFN)-inducible GTPase that plays important roles in innate immunity against a diverse range of bacterial, viral and protozoan pathogens. Negatively regulates the antiviral response by inhibiting activation of IRF7 transcription factor. This chain is Guanylate-binding protein 4, found in Mus musculus (Mouse).